Consider the following 264-residue polypeptide: Forkhead box protein pes-1 (264 aa).

2 disordered regions span residues Asp-15–Lys-36 and Asp-50–Arg-93. The span at Asp-50 to Ser-64 shows a compositional bias: low complexity. Positions Glu-70–Ser-89 are enriched in polar residues. The fork-head DNA-binding region spans Arg-93–Arg-186.

The protein localises to the nucleus. Its subcellular location is the cytoplasm. Functionally, transcription factor. Plays a role in embryogenesis and later development, perhaps acting redundantly with forkhead protein fkh-2. This is Forkhead box protein pes-1 from Caenorhabditis elegans.